The primary structure comprises 379 residues: Glucose-1-phosphate adenylyltransferase (379 aa).

Residues glycine 164, 179 to 180, and serine 190 each bind alpha-D-glucose 1-phosphate; that span reads EK.

This sequence belongs to the bacterial/plant glucose-1-phosphate adenylyltransferase family. Homotetramer.

The enzyme catalyses alpha-D-glucose 1-phosphate + ATP + H(+) = ADP-alpha-D-glucose + diphosphate. It functions in the pathway glycan biosynthesis; glycogen biosynthesis. Involved in the biosynthesis of ADP-glucose, a building block required for the elongation reactions to produce glycogen. Catalyzes the reaction between ATP and alpha-D-glucose 1-phosphate (G1P) to produce pyrophosphate and ADP-Glc. This is Glucose-1-phosphate adenylyltransferase from Lactiplantibacillus plantarum (strain ATCC BAA-793 / NCIMB 8826 / WCFS1) (Lactobacillus plantarum).